The chain runs to 222 residues: Ras-related protein Rab11C (222 aa).

22-29 lines the GTP pocket; that stretch reads GDSAVGKT. The Effector region signature appears at 44–52; the sequence is SKATIGVEF. GTP-binding positions include 70 to 74 and 128 to 131; these read DTAGQ and NKTD. S-geranylgeranyl cysteine attachment occurs at residues Cys219 and Cys220.

Belongs to the small GTPase superfamily. Rab family.

It localises to the cell membrane. In Nicotiana tabacum (Common tobacco), this protein is Ras-related protein Rab11C (RAB11C).